The sequence spans 208 residues: Outer-membrane lipoprotein carrier protein (208 aa).

A signal peptide spans 1-21 (MPAFRYLIVLPLLCWGFASQA).

Belongs to the LolA family. As to quaternary structure, monomer.

The protein localises to the periplasm. In terms of biological role, participates in the translocation of lipoproteins from the inner membrane to the outer membrane. Only forms a complex with a lipoprotein if the residue after the N-terminal Cys is not an aspartate (The Asp acts as a targeting signal to indicate that the lipoprotein should stay in the inner membrane). This chain is Outer-membrane lipoprotein carrier protein, found in Methylococcus capsulatus (strain ATCC 33009 / NCIMB 11132 / Bath).